The sequence spans 201 residues: Peptidyl-prolyl cis-trans isomerase FKBP11 (201 aa).

A signal peptide spans 1–27 (MTLRPSLLPLHLLLLLLLSAAVCRAEA). The region spanning 57-144 (GDTLHIHYTG…QYDVELIALI (88 aa)) is the PPIase FKBP-type domain. The chain crosses the membrane as a helical span at residues 156–176 (ILPLVGMAMVPALLGLIGYHL).

It belongs to the FKBP-type PPIase family. Interacts with IFITM5.

The protein resides in the membrane. The catalysed reaction is [protein]-peptidylproline (omega=180) = [protein]-peptidylproline (omega=0). In terms of biological role, PPIases accelerate the folding of proteins during protein synthesis. This chain is Peptidyl-prolyl cis-trans isomerase FKBP11 (FKBP11), found in Homo sapiens (Human).